The following is a 497-amino-acid chain: Aspartyl/glutamyl-tRNA(Asn/Gln) amidotransferase subunit B (497 aa).

It belongs to the GatB/GatE family. GatB subfamily. Heterotrimer of A, B and C subunits.

The catalysed reaction is L-glutamyl-tRNA(Gln) + L-glutamine + ATP + H2O = L-glutaminyl-tRNA(Gln) + L-glutamate + ADP + phosphate + H(+). It carries out the reaction L-aspartyl-tRNA(Asn) + L-glutamine + ATP + H2O = L-asparaginyl-tRNA(Asn) + L-glutamate + ADP + phosphate + 2 H(+). Allows the formation of correctly charged Asn-tRNA(Asn) or Gln-tRNA(Gln) through the transamidation of misacylated Asp-tRNA(Asn) or Glu-tRNA(Gln) in organisms which lack either or both of asparaginyl-tRNA or glutaminyl-tRNA synthetases. The reaction takes place in the presence of glutamine and ATP through an activated phospho-Asp-tRNA(Asn) or phospho-Glu-tRNA(Gln). The sequence is that of Aspartyl/glutamyl-tRNA(Asn/Gln) amidotransferase subunit B from Cutibacterium acnes (strain DSM 16379 / KPA171202) (Propionibacterium acnes).